We begin with the raw amino-acid sequence, 262 residues long: Type III pantothenate kinase (262 aa).

Residue 9 to 16 (DAGNSRIK) participates in ATP binding. Substrate-binding positions include tyrosine 96 and 103-106 (GSDR). The active-site Proton acceptor is aspartate 105. Threonine 129 provides a ligand contact to ATP. Threonine 189 is a substrate binding site.

The protein belongs to the type III pantothenate kinase family. Homodimer. NH4(+) serves as cofactor. Requires K(+) as cofactor.

Its subcellular location is the cytoplasm. It catalyses the reaction (R)-pantothenate + ATP = (R)-4'-phosphopantothenate + ADP + H(+). It participates in cofactor biosynthesis; coenzyme A biosynthesis; CoA from (R)-pantothenate: step 1/5. In terms of biological role, catalyzes the phosphorylation of pantothenate (Pan), the first step in CoA biosynthesis. This chain is Type III pantothenate kinase, found in Burkholderia vietnamiensis (strain G4 / LMG 22486) (Burkholderia cepacia (strain R1808)).